A 327-amino-acid polypeptide reads, in one-letter code: Zinc transport protein ZntB (327 aa).

Residues M1 to S271 are Cytoplasmic-facing. Residues L272–G292 form a helical membrane-spanning segment. Over G293–S300 the chain is Periplasmic. Residues F301 to L321 form a helical membrane-spanning segment. Residues K322 to L327 are Cytoplasmic-facing.

Belongs to the CorA metal ion transporter (MIT) (TC 1.A.35) family.

It is found in the cell inner membrane. The catalysed reaction is Zn(2+)(out) + H(+)(out) = Zn(2+)(in) + H(+)(in). Zinc transporter. Acts as a Zn(2+):proton symporter, which likely mediates zinc ion uptake. This is Zinc transport protein ZntB from Yersinia enterocolitica serotype O:8 / biotype 1B (strain NCTC 13174 / 8081).